The primary structure comprises 247 residues: Small ribosomal subunit protein uS3 (247 aa).

One can recognise a KH type-2 domain in the interval 39 to 107 (VRDYLRKKLD…PAQVNIEEIT (69 aa)). A disordered region spans residues 213-247 (SVYNPPKEDKTRAPKRRGRSNSNRRNSDRANTDRG). Basic and acidic residues predominate over residues 237 to 247 (RNSDRANTDRG).

The protein belongs to the universal ribosomal protein uS3 family. Part of the 30S ribosomal subunit. Forms a tight complex with proteins S10 and S14.

Functionally, binds the lower part of the 30S subunit head. Binds mRNA in the 70S ribosome, positioning it for translation. This Psychrobacter sp. (strain PRwf-1) protein is Small ribosomal subunit protein uS3.